Here is a 207-residue protein sequence, read N- to C-terminus: Glutathione S-transferase 3 (207 aa).

In terms of domain architecture, GST N-terminal spans 2 to 79; sequence VHYKLTYFNA…YLARKFGFVG (78 aa). Residues Tyr-8, Lys-43, 49–51, and 63–64 contribute to the glutathione site; these read GQV and QS. The GST C-terminal domain occupies 81–207; that stretch reads TAEEELQADE…WLAKRPETRF (127 aa).

This sequence belongs to the GST superfamily. Sigma family.

The enzyme catalyses RX + glutathione = an S-substituted glutathione + a halide anion + H(+). Functionally, conjugation of reduced glutathione to a wide number of exogenous and endogenous hydrophobic electrophiles. This Caenorhabditis elegans protein is Glutathione S-transferase 3 (gst-3).